Reading from the N-terminus, the 178-residue chain is Alkyl hydroperoxide reductase AhpD (178 aa).

Residue cysteine 130 is the Proton donor of the active site. An intrachain disulfide couples cysteine 130 to cysteine 133. Cysteine 133 functions as the Cysteine sulfenic acid (-SOH) intermediate in the catalytic mechanism.

The protein belongs to the AhpD family. Homotrimer.

The enzyme catalyses N(6)-[(R)-dihydrolipoyl]-L-lysyl-[lipoyl-carrier protein] + a hydroperoxide = N(6)-[(R)-lipoyl]-L-lysyl-[lipoyl-carrier protein] + an alcohol + H2O. Antioxidant protein with alkyl hydroperoxidase activity. Required for the reduction of the AhpC active site cysteine residues and for the regeneration of the AhpC enzyme activity. This is Alkyl hydroperoxide reductase AhpD from Mycobacterium ulcerans (strain Agy99).